The following is a 316-amino-acid chain: Acetyl-coenzyme A carboxylase carboxyl transferase subunit alpha (316 aa).

The CoA carboxyltransferase C-terminal domain occupies 39-293 (RLQDKSKALT…RGELLTQLKM (255 aa)).

It belongs to the AccA family. In terms of assembly, acetyl-CoA carboxylase is a heterohexamer composed of biotin carboxyl carrier protein (AccB), biotin carboxylase (AccC) and two subunits each of ACCase subunit alpha (AccA) and ACCase subunit beta (AccD).

The protein resides in the cytoplasm. The catalysed reaction is N(6)-carboxybiotinyl-L-lysyl-[protein] + acetyl-CoA = N(6)-biotinyl-L-lysyl-[protein] + malonyl-CoA. It functions in the pathway lipid metabolism; malonyl-CoA biosynthesis; malonyl-CoA from acetyl-CoA: step 1/1. Its function is as follows. Component of the acetyl coenzyme A carboxylase (ACC) complex. First, biotin carboxylase catalyzes the carboxylation of biotin on its carrier protein (BCCP) and then the CO(2) group is transferred by the carboxyltransferase to acetyl-CoA to form malonyl-CoA. The polypeptide is Acetyl-coenzyme A carboxylase carboxyl transferase subunit alpha (Pseudomonas aeruginosa (strain LESB58)).